The primary structure comprises 501 residues: Alpha-internexin (501 aa).

Residues 1-87 are head; it reads MSFGSEHYLC…SQAAARTNEY (87 aa). A Phosphoserine modification is found at Ser72. The coil 1A stretch occupies residues 88–129; the sequence is KIIRTNEKEQLQGLNDRFAVFIEKVHQLETQNRALEAELAAL. In terms of domain architecture, IF rod spans 94 to 407; sequence EKEQLQGLND…KLLEGEETRF (314 aa). The tract at residues 130-142 is linker 1; the sequence is RQRHAEPSRVGEL. Residues 143 to 238 are coil 1B; the sequence is FQRELRELRA…QVHDEEVAEL (96 aa). Position 219 is a phosphoserine (Ser219). Residues 239–262 are linker 2; the sequence is LATLQASSQAAAEVDVAVAKPDLT. Positions 263 to 408 are coil 2; it reads SALREIRAQY…LLEGEETRFS (146 aa). Lys290 carries the post-translational modification N6-acetyllysine. Phosphoserine is present on residues Ser335 and Ser498. A tail region spans residues 409–501; it reads TGGLSISGLN…EESTSSSQKM (93 aa). Residues 441-501 are disordered; sequence SAGLSLKKEE…EESTSSSQKM (61 aa). Residues 488-501 show a composition bias toward polar residues; sequence KSATEESTSSSQKM.

Belongs to the intermediate filament family. Forms homodimers (in vitro). Forms heterodimers with NEFL, NEFM or NEFH (in vitro). O-glycosylated.

Class-IV neuronal intermediate filament that is able to self-assemble. It is involved in the morphogenesis of neurons. It may form an independent structural network without the involvement of other neurofilaments or it may cooperate with NEFL to form the filamentous backbone to which NEFM and NEFH attach to form the cross-bridges. May also cooperate with the neuronal intermediate filament protein PRPH to form filamentous networks. The chain is Alpha-internexin (Ina) from Mus musculus (Mouse).